Here is a 337-residue protein sequence, read N- to C-terminus: G-protein coupled receptor 26 (337 aa).

Residues 1–10 (MNSWDAGLAG) are Extracellular-facing. A helical transmembrane segment spans residues 11–31 (LLVGTIGVSLLSNGLVLLCLL). Residues 32-47 (HSADIRRQAPALFTLN) are Cytoplasmic-facing. Residues 48–68 (LTCGNLLCTVVNMPLTLAGVV) traverse the membrane as a helical segment. Topologically, residues 69–81 (AQRQPAGDRLCRL) are extracellular. Cysteine 79 and cysteine 156 form a disulfide bridge. Residues 82-102 (AAFLDTFLAANSMLSMAALSI) form a helical membrane-spanning segment. Over 103–123 (DRWVAVVFPLSYRAKMRLRDA) the chain is Cytoplasmic. A helical transmembrane segment spans residues 124–144 (AFMVAYTWLHALTFPATALAL). The Extracellular segment spans residues 145-168 (SWLGFHQLYASCTLCSRRPDERLR). A helical membrane pass occupies residues 169–189 (FAVFTSAFHALSFLLSFIVLC). Over 190–245 (FTYLKVLKVARFHCKRIDVITMQTLVLLVDIHPSVRERCLEEQKRRRQRATKKIST) the chain is Cytoplasmic. The helical transmembrane segment at 246–266 (FIGTFLVCFAPYVITRLVELF) threads the bilayer. At 267 to 276 (STAPIDSHWG) the chain is on the extracellular side. Residues 277–297 (VLSKCLAYSKAASDPFVYSLL) traverse the membrane as a helical segment. Residues 298–337 (RHQYRRSCKELLNRIFNRRSIHSVGLTGDSHSQNILPVSE) are Cytoplasmic-facing.

It belongs to the G-protein coupled receptor 1 family. In terms of tissue distribution, detected in extracts of several brain regions including striatum, pons, cerebellum and cortex. Not detected in numerous peripheral tissue extracts, except in testis. In the brain, detected in cortical structures including the anterior cingulate area, posterior cingulate and the frontoparietal, somatosensory and piriform cortices. Prominent also in the olfactory tubercle, the islands of Calleja, ventromedial and posterior nuclei of the hypothalamus, the medial septal nucleus, nucleus of the diagonal band and the ventral tegmental area. Localized also to hippocampal structures, with signals strongest over the CA2 and CA3 regions of Ammon's horn and less so over the dentate gyrus. Expressed in the caudate putamen only in its most caudal portion, with a decreasing gradient of signal from the dorsal to ventral aspect. Strong expression associated with a single pontine structure, the inferior olivary nucleus.

The protein resides in the cell membrane. Its function is as follows. Orphan receptor. Displays a significant level of constitutive activity. Its effect is mediated by G(s)-alpha protein that stimulate adenylate cyclase, resulting in an elevation of intracellular cAMP. The sequence is that of G-protein coupled receptor 26 (Gpr26) from Rattus norvegicus (Rat).